A 365-amino-acid polypeptide reads, in one-letter code: F-box protein At1g48060 (365 aa).

The interval 1–20 (MKPQEEEEKNENMARKRSKS) is disordered. Residues 20 to 69 (SSSSLSIPLDIATDIFLRLPAKSVVRFSCVAKHWSSITTAPYFTNSFETR) enclose the F-box domain.

The chain is F-box protein At1g48060 from Arabidopsis thaliana (Mouse-ear cress).